The following is a 193-amino-acid chain: Potassium-transporting ATPase KdpC subunit (193 aa).

The chain crosses the membrane as a helical span at residues 14–34; it reads ITFTFLVLCGLVYPLIVTGIA.

This sequence belongs to the KdpC family. As to quaternary structure, the system is composed of three essential subunits: KdpA, KdpB and KdpC.

The protein resides in the cell membrane. Part of the high-affinity ATP-driven potassium transport (or Kdp) system, which catalyzes the hydrolysis of ATP coupled with the electrogenic transport of potassium into the cytoplasm. This subunit acts as a catalytic chaperone that increases the ATP-binding affinity of the ATP-hydrolyzing subunit KdpB by the formation of a transient KdpB/KdpC/ATP ternary complex. This Bacillus cereus (strain Q1) protein is Potassium-transporting ATPase KdpC subunit.